Reading from the N-terminus, the 306-residue chain is Probable 2-dehydro-3-deoxygalactonokinase DgoK1 (306 aa).

The protein belongs to the DgoK family.

It carries out the reaction 2-dehydro-3-deoxy-D-galactonate + ATP = 2-dehydro-3-deoxy-6-phospho-D-galactonate + ADP + H(+). It participates in carbohydrate acid metabolism; D-galactonate degradation; D-glyceraldehyde 3-phosphate and pyruvate from D-galactonate: step 2/3. In terms of biological role, involved in the degradation of galactose via the DeLey-Doudoroff pathway. The chain is Probable 2-dehydro-3-deoxygalactonokinase DgoK1 (dgoK1) from Rhizobium meliloti (strain 1021) (Ensifer meliloti).